The chain runs to 343 residues: MGLLERLRKEWFIVGIILVIAAAKLEPTVGVKGGPLKPEITITYIAVSAIFFNSGLSLKTEELTNALMHVKLHLFVQLFTLVFFPTAIWLFLQVLSLTPINEWLLKGLQTVSCMPPPVSSAVILTKAVGGNEAAAIFNSAFGSFLGIVVTPLLLLLFLGSSSSVPFTSIFSQLFMTVVVPLIIGQIVRRYIKDWLERKKPPFGAISSCVLLMIIYTTFCDTFSNPNIDLDTFSLVVIVFIIFFIQLAFMLLTFLFSTSKNSGFTPADTVAIVFCSTHKSLTLGIPMLKIVFVGYEHLSLISVPLLIYHPAQILLGSVLVPTIKSWMLSRQKALKLTRQPKIPL.

The Cytoplasmic portion of the chain corresponds to 1–10 (MGLLERLRKE). A helical transmembrane segment spans residues 11-31 (WFIVGIILVIAAAKLEPTVGV). At 32–37 (KGGPLK) the chain is on the extracellular side. Residues 38–58 (PEITITYIAVSAIFFNSGLSL) traverse the membrane as a helical segment. Residues 59–71 (KTEELTNALMHVK) are Cytoplasmic-facing. A helical transmembrane segment spans residues 72-92 (LHLFVQLFTLVFFPTAIWLFL). Residues 93–116 (QVLSLTPINEWLLKGLQTVSCMPP) are Extracellular-facing. A helical membrane pass occupies residues 117–137 (PVSSAVILTKAVGGNEAAAIF). A topological domain (cytoplasmic) is located at residue asparagine 138. The chain crosses the membrane as a helical span at residues 139–159 (SAFGSFLGIVVTPLLLLLFLG). At 160-163 (SSSS) the chain is on the extracellular side. A helical transmembrane segment spans residues 164-184 (VPFTSIFSQLFMTVVVPLIIG). The Cytoplasmic portion of the chain corresponds to 185 to 201 (QIVRRYIKDWLERKKPP). A helical transmembrane segment spans residues 202-222 (FGAISSCVLLMIIYTTFCDTF). At 223-234 (SNPNIDLDTFSL) the chain is on the extracellular side. A helical transmembrane segment spans residues 235 to 255 (VVIVFIIFFIQLAFMLLTFLF). Topologically, residues 256-270 (STSKNSGFTPADTVA) are cytoplasmic. The chain crosses the membrane as a helical span at residues 271 to 291 (IVFCSTHKSLTLGIPMLKIVF). Topologically, residues 292 to 298 (VGYEHLS) are extracellular. Residues 299 to 319 (LISVPLLIYHPAQILLGSVLV) traverse the membrane as a helical segment. At 320–343 (PTIKSWMLSRQKALKLTRQPKIPL) the chain is on the cytoplasmic side.

The protein belongs to the bile acid:sodium symporter (BASS) (TC 2.A.28) family. Strongly expressed in small intestine. Moderately expressed in spleen. Weakly expressed in skeletal muscle. Not detected in other tissues tested.

It is found in the cell membrane. The protein resides in the endoplasmic reticulum membrane. Its subcellular location is the golgi apparatus membrane. Functionally, involved in teeth and skeletal development. Has an essential role in the biosynthesis and trafficking of glycosaminoglycans and glycoproteins to produce a proper functioning extracellular matrix. Required for extracellular matrix mineralization. Also involved in the regulation of cellular calcium homeostasis. Does not show transport activity towards bile acids or steroid sulfates. The polypeptide is Sodium/bile acid cotransporter 7-A (slc10a7-a) (Xenopus laevis (African clawed frog)).